The chain runs to 668 residues: Nuclear pore complex protein Nup75 (668 aa).

Belongs to the nucleoporin Nup85 family. Component of the nuclear pore complex (NPC). Component of the NPC Nup107-160 subcomplex.

It is found in the nucleus. The protein localises to the nuclear pore complex. It localises to the nucleus membrane. Its function is as follows. Component of the nuclear pore complex (NPC) that seems to be required for NPC assembly and maintenance. Required for nuclear import of phosphorylated Mad via importin msk. Has no role in classical nuclear localization signal (cNLS)-dependent nuclear import via importin-beta. Facilitates the interaction between Nup93 and sec13 with msk. The chain is Nuclear pore complex protein Nup75 from Drosophila melanogaster (Fruit fly).